A 415-amino-acid chain; its full sequence is Transfer protein TraSA (415 aa).

A FtsK domain is found at 127–326 (DGAVHYRDYR…HRVNDETSAN (200 aa)). 145–152 (GATESGKS) serves as a coordination point for ATP.

In Streptomyces ambofaciens, this protein is Transfer protein TraSA (traSA).